We begin with the raw amino-acid sequence, 149 residues long: Protein E6 (149 aa).

2 zinc fingers span residues 30–66 (CVYC…CTKC) and 103–139 (CITC…CIAC). A PDZ-binding domain motif is present at residues 147-149 (TQV).

This sequence belongs to the papillomaviridae E6 protein family. Forms homodimers. Interacts with ubiquitin-protein ligase UBE3A/E6-AP and thus forms a complex with human TP53. Interacts with human NFX1 and MAGI3. Interacts with human IRF3; this interaction inhibits the establishment of antiviral state. Interacts with human TYK2; this interaction inhibits JAK-STAT activation by interferon alpha. Interacts with host DLG1; this interaction leads to the proteasomal degradation of DLG1.

It is found in the host cytoplasm. The protein resides in the host nucleus. Plays a major role in the induction and maintenance of cellular transformation. Acts mainly as an oncoprotein by stimulating the destruction of many host cell key regulatory proteins. E6 associates with host UBE3A/E6-AP ubiquitin-protein ligase, and inactivates tumor suppressors TP53 and TP73 by targeting them to the 26S proteasome for degradation. In turn, DNA damage and chromosomal instabilities increase and lead to cell proliferation and cancer development. The complex E6/E6AP targets several other substrates to degradation via the proteasome including host DLG1 or NFX1, a repressor of human telomerase reverse transcriptase (hTERT). The resulting increased expression of hTERT prevents the shortening of telomere length leading to cell immortalization. Other cellular targets including BAK1, Fas-associated death domain-containing protein (FADD) and procaspase 8, are degraded by E6/E6AP causing inhibition of apoptosis. E6 also inhibits immune response by interacting with host IRF3 and TYK2. These interactions prevent IRF3 transcriptional activities and inhibit TYK2-mediated JAK-STAT activation by interferon alpha resulting in inhibition of the interferon signaling pathway. This chain is Protein E6, found in Human papillomavirus 31.